Reading from the N-terminus, the 551-residue chain is Cytochrome c lysine N-methyltransferase 1 (551 aa).

The 228-residue stretch at 46 to 273 (DKIELLRVSS…PNTEVLITYK (228 aa)) folds into the SET domain. Residues 184–288 (IELLRQIYSA…LAMITKYGFD (105 aa)) are SET-like.

It belongs to the class V-like SAM-binding methyltransferase superfamily.

It is found in the cytoplasm. It localises to the cytosol. It catalyses the reaction L-lysyl-[cytochrome c] + S-adenosyl-L-methionine = N(6)-methyl-L-lysyl-[cytochrome c] + S-adenosyl-L-homocysteine + H(+). Methyltransferase which mediates trimethylation of cytochrome c (CYC1). The sequence is that of Cytochrome c lysine N-methyltransferase 1 (CTM1) from Candida glabrata (strain ATCC 2001 / BCRC 20586 / JCM 3761 / NBRC 0622 / NRRL Y-65 / CBS 138) (Yeast).